The sequence spans 322 residues: Probable transcription factor KAN3 (322 aa).

The interval 1-35 (MELFPSQPDLYLKISRRREEEQEKESQELQEQEVE) is disordered. Residues 17 to 35 (RREEEQEKESQELQEQEVE) show a composition bias toward basic and acidic residues. The HTH myb-type domain occupies 161 to 221 (GVRAPRMRWT…HLQMYRTIKS (61 aa)). Residues 192–217 (PKSVLELMDVQDLTLAHVKSHLQMYR) constitute a DNA-binding region (H-T-H motif). Disordered regions lie at residues 222-244 (TEKP…NSER) and 267-322 (KASS…NLSP). Composition is skewed to polar residues over residues 224 to 241 (KPTT…SQVN) and 299 to 322 (LTGT…NLSP).

Expressed in developing phloem.

The protein resides in the nucleus. In terms of biological role, probable transcription factor that regulates lateral organ polarity. Plays a role in lateral root formation and development. This Arabidopsis thaliana (Mouse-ear cress) protein is Probable transcription factor KAN3 (KAN3).